A 244-amino-acid chain; its full sequence is Aspartate/glutamate leucyltransferase (244 aa).

This sequence belongs to the R-transferase family. Bpt subfamily.

It is found in the cytoplasm. It catalyses the reaction N-terminal L-glutamyl-[protein] + L-leucyl-tRNA(Leu) = N-terminal L-leucyl-L-glutamyl-[protein] + tRNA(Leu) + H(+). The catalysed reaction is N-terminal L-aspartyl-[protein] + L-leucyl-tRNA(Leu) = N-terminal L-leucyl-L-aspartyl-[protein] + tRNA(Leu) + H(+). Its function is as follows. Functions in the N-end rule pathway of protein degradation where it conjugates Leu from its aminoacyl-tRNA to the N-termini of proteins containing an N-terminal aspartate or glutamate. The chain is Aspartate/glutamate leucyltransferase from Bordetella parapertussis (strain 12822 / ATCC BAA-587 / NCTC 13253).